A 316-amino-acid polypeptide reads, in one-letter code: CD276 antigen (316 aa).

The first 28 residues, 1-28 (MLRGWGGPSVGVCVRTALGVLCLCLTGA), serve as a signal peptide directing secretion. Residues 29–139 (VEVQVSEDPV…DSAAVSLQVA (111 aa)) enclose the Ig-like V-type domain. Topologically, residues 29–248 (VEVQVSEDPV…GQPLTFPPEA (220 aa)) are extracellular. Residues Asn-104, Asn-189, and Asn-215 are each glycosylated (N-linked (GlcNAc...) asparagine). Residues 145–238 (PSMTLEPNKD…QDAHGSVTIT (94 aa)) form the Ig-like C2-type domain. A disulfide bridge connects residues Cys-165 and Cys-220. The chain crosses the membrane as a helical span at residues 249–269 (LWVTVGLSVCLVVLLVALAFV). Residues 270 to 316 (CWRKIKQSCEEENAGAEDQDGDGEGSKTALRPLKPSENKEDDGQEIA) lie on the Cytoplasmic side of the membrane. A compositionally biased stretch (acidic residues) spans 280 to 292 (EENAGAEDQDGDG). The tract at residues 280-316 (EENAGAEDQDGDGEGSKTALRPLKPSENKEDDGQEIA) is disordered.

The protein belongs to the immunoglobulin superfamily. BTN/MOG family. Interacts with TREML2 and this interaction enhances T-cell activation. In terms of tissue distribution, ubiquitous.

The protein localises to the membrane. In terms of biological role, modulates T-cell-mediated immune responses and the development of acute and chronic transplant rejection. Plays a positive regulatory role in bone formation and has a dual role in the bone-immune interface. Induces antitumor immunity as it activates both acquired and innate immunity leading to natural killer cell and CD8 T-cell dependent killing of tumor cells. The chain is CD276 antigen (Cd276) from Mus musculus (Mouse).